The following is a 474-amino-acid chain: 6-phospho-beta-galactosidase (474 aa).

Positions 18, 115, 159, 160, and 296 each coordinate D-galactose 6-phosphate. The active-site Proton donor is the Glu-160. Catalysis depends on Glu-374, which acts as the Nucleophile. D-galactose 6-phosphate contacts are provided by Ser-427, Trp-428, Lys-434, and Tyr-436.

It belongs to the glycosyl hydrolase 1 family.

The enzyme catalyses a 6-phospho-beta-D-galactoside + H2O = D-galactose 6-phosphate + an alcohol. Its pathway is carbohydrate metabolism; lactose degradation; D-galactose 6-phosphate and beta-D-glucose from lactose 6-phosphate: step 1/1. This is 6-phospho-beta-galactosidase from Clostridium acetobutylicum (strain ATCC 824 / DSM 792 / JCM 1419 / IAM 19013 / LMG 5710 / NBRC 13948 / NRRL B-527 / VKM B-1787 / 2291 / W).